The following is a 374-amino-acid chain: Putative glutamate--cysteine ligase 2-1 (374 aa).

The protein belongs to the glutamate--cysteine ligase type 2 family. YbdK subfamily.

The enzyme catalyses L-cysteine + L-glutamate + ATP = gamma-L-glutamyl-L-cysteine + ADP + phosphate + H(+). Its function is as follows. ATP-dependent carboxylate-amine ligase which exhibits weak glutamate--cysteine ligase activity. The chain is Putative glutamate--cysteine ligase 2-1 from Saccharopolyspora erythraea (strain ATCC 11635 / DSM 40517 / JCM 4748 / NBRC 13426 / NCIMB 8594 / NRRL 2338).